A 119-amino-acid polypeptide reads, in one-letter code: Ribonuclease P protein component (119 aa).

Belongs to the RnpA family. As to quaternary structure, consists of a catalytic RNA component (M1 or rnpB) and a protein subunit.

It catalyses the reaction Endonucleolytic cleavage of RNA, removing 5'-extranucleotides from tRNA precursor.. In terms of biological role, RNaseP catalyzes the removal of the 5'-leader sequence from pre-tRNA to produce the mature 5'-terminus. It can also cleave other RNA substrates such as 4.5S RNA. The protein component plays an auxiliary but essential role in vivo by binding to the 5'-leader sequence and broadening the substrate specificity of the ribozyme. The sequence is that of Ribonuclease P protein component from Escherichia fergusonii (strain ATCC 35469 / DSM 13698 / CCUG 18766 / IAM 14443 / JCM 21226 / LMG 7866 / NBRC 102419 / NCTC 12128 / CDC 0568-73).